The primary structure comprises 363 residues: Tetraacyldisaccharide 4'-kinase (363 aa).

62–69 (RVGGTGKT) provides a ligand contact to ATP.

Belongs to the LpxK family.

It carries out the reaction a lipid A disaccharide + ATP = a lipid IVA + ADP + H(+). The protein operates within glycolipid biosynthesis; lipid IV(A) biosynthesis; lipid IV(A) from (3R)-3-hydroxytetradecanoyl-[acyl-carrier-protein] and UDP-N-acetyl-alpha-D-glucosamine: step 6/6. Functionally, transfers the gamma-phosphate of ATP to the 4'-position of a tetraacyldisaccharide 1-phosphate intermediate (termed DS-1-P) to form tetraacyldisaccharide 1,4'-bis-phosphate (lipid IVA). The polypeptide is Tetraacyldisaccharide 4'-kinase (Polynucleobacter asymbioticus (strain DSM 18221 / CIP 109841 / QLW-P1DMWA-1) (Polynucleobacter necessarius subsp. asymbioticus)).